The following is a 532-amino-acid chain: Flavin-containing monooxygenase 3 (532 aa).

Residues G9 to S13, E32, L40 to W41, and N61 to S62 each bind FAD. NADP(+) is bound by residues S60–N61 and S195–D198. Residue S401 is modified to Phosphoserine. A helical transmembrane segment spans residues F510–V530.

Belongs to the FMO family. FAD serves as cofactor.

Its subcellular location is the microsome membrane. It is found in the endoplasmic reticulum membrane. It catalyses the reaction trimethylamine + NADPH + O2 = trimethylamine N-oxide + NADP(+) + H2O. The enzyme catalyses N,N-dimethylaniline + NADPH + O2 + H(+) = N,N-dimethylaniline N-oxide + NADP(+) + H2O. The catalysed reaction is hypotaurine + NADPH + O2 + H(+) = taurine + NADP(+) + H2O. It carries out the reaction (S)-nicotine + NADPH + O2 = trans-(S)-nicotine N(1')-oxide + NADP(+) + H2O. It catalyses the reaction albendazole + NADPH + O2 + H(+) = albendazole S-oxide + NADP(+) + H2O. Its function is as follows. Essential hepatic enzyme that catalyzes the oxygenation of a wide variety of nitrogen- and sulfur-containing compounds including drugs as well as dietary compounds. Plays an important role in the metabolism of trimethylamine (TMA), via the production of trimethylamine N-oxide (TMAO) metabolite. TMA is generated by the action of gut microbiota using dietary precursors such as choline, choline containing compounds, betaine or L-carnitine. By regulating TMAO concentration, FMO3 directly impacts both platelet responsiveness and rate of thrombus formation. This Pan troglodytes (Chimpanzee) protein is Flavin-containing monooxygenase 3 (FMO3).